The sequence spans 308 residues: Acetylglutamate kinase (308 aa).

Substrate is bound by residues 67-68 (GG), Arg89, and Asn193.

It belongs to the acetylglutamate kinase family. ArgB subfamily.

The protein resides in the cytoplasm. The enzyme catalyses N-acetyl-L-glutamate + ATP = N-acetyl-L-glutamyl 5-phosphate + ADP. Its pathway is amino-acid biosynthesis; L-arginine biosynthesis; N(2)-acetyl-L-ornithine from L-glutamate: step 2/4. Functionally, catalyzes the ATP-dependent phosphorylation of N-acetyl-L-glutamate. The protein is Acetylglutamate kinase of Nitratidesulfovibrio vulgaris (strain DP4) (Desulfovibrio vulgaris).